Consider the following 391-residue polypeptide: Mannonate dehydratase (391 aa).

Belongs to the mannonate dehydratase family. Fe(2+) serves as cofactor. Requires Mn(2+) as cofactor.

The catalysed reaction is D-mannonate = 2-dehydro-3-deoxy-D-gluconate + H2O. It participates in carbohydrate metabolism; pentose and glucuronate interconversion. In terms of biological role, catalyzes the dehydration of D-mannonate. This chain is Mannonate dehydratase, found in Marinomonas sp. (strain MWYL1).